Here is a 270-residue protein sequence, read N- to C-terminus: Non-homologous end joining protein Ku (270 aa).

One can recognise a Ku domain in the interval 10–194; sequence SLGLLNIGIK…NYPIQKQELT (185 aa).

The protein belongs to the prokaryotic Ku family. As to quaternary structure, homodimer. Interacts with LigD.

Functionally, with LigD forms a non-homologous end joining (NHEJ) DNA repair enzyme, which repairs dsDNA breaks with reduced fidelity. Binds linear dsDNA with 5'- and 3'- overhangs but not closed circular dsDNA nor ssDNA. Recruits and stimulates the ligase activity of LigD. This Bacillus thuringiensis subsp. konkukian (strain 97-27) protein is Non-homologous end joining protein Ku.